We begin with the raw amino-acid sequence, 210 residues long: Cytidylate kinase (210 aa).

Position 9 to 17 (9 to 17) interacts with ATP; it reads GPAAAGKGT.

This sequence belongs to the cytidylate kinase family. Type 1 subfamily.

Its subcellular location is the cytoplasm. It catalyses the reaction CMP + ATP = CDP + ADP. It carries out the reaction dCMP + ATP = dCDP + ADP. The sequence is that of Cytidylate kinase from Agrobacterium fabrum (strain C58 / ATCC 33970) (Agrobacterium tumefaciens (strain C58)).